A 61-amino-acid polypeptide reads, in one-letter code: Metallothionein-2 (61 aa).

M1 bears the N-acetylmethionine mark. A beta region spans residues 1-29 (MDPNCSCTAGESCTCAGSCKCKDCKCASC). Residues C5, C7, C13, C15, C19, C21, C24, C26, C29, C33, C34, C36, C37, C41, C44, C48, C50, and C57 each coordinate a divalent metal cation. The segment at 30-61 (KKSCCSCCPVGCAKCAQGCVCKGASDKCSCCA) is alpha. S58 is subject to Phosphoserine. A divalent metal cation is bound by residues C59 and C60.

This sequence belongs to the metallothionein superfamily. Type 1 family. Interacts with EOLA1.

Metallothioneins have a high content of cysteine residues that bind various heavy metals; these proteins are transcriptionally regulated by both heavy metals and glucocorticoids. The sequence is that of Metallothionein-2 (MT2A) from Ovis aries (Sheep).